The sequence spans 205 residues: MIENKFNNTILNSNSSTHDKISETKKLFGLWIYLMSDCIMFAVLFAVYAIVSSNISINLISNKIFNLSSILLETFLLLLSSLSCGFVVIAMNQKRIKMIYSFLTITFIFGLIFLLMEVHEFYELIIENFGPDKNAFFSIFFTLVATHGVHIFFGLILILSILYQIKKLGLTNSIRTRILCFSVFWHFLDIIWICVFTFVYLNGAI.

The Cytoplasmic segment spans residues M1–K26. Residues L27 to V47 traverse the membrane as a helical segment. Topologically, residues Y48–S69 are extracellular. Residues I70–A90 form a helical membrane-spanning segment. Topologically, residues M91–K97 are cytoplasmic. Residues M98–V118 traverse the membrane as a helical segment. Over H119–S138 the chain is Extracellular. A helical membrane pass occupies residues I139–L159. The Cytoplasmic portion of the chain corresponds to S160 to R177. The chain crosses the membrane as a helical span at residues I178–F198. Topologically, residues V199–I205 are extracellular.

The protein belongs to the cytochrome c oxidase subunit 3 family. In terms of assembly, heterooctamer of two A chains, two B chains, two C chains and two D chains.

Its subcellular location is the cell membrane. Its function is as follows. Cytochrome bo(3) ubiquinol terminal oxidase is the component of the aerobic respiratory chain of E.coli that predominates when cells are grown at high aeration. Has proton pump activity across the membrane in addition to electron transfer, pumping 2 protons/electron. This Buchnera aphidicola subsp. Acyrthosiphon pisum (strain APS) (Acyrthosiphon pisum symbiotic bacterium) protein is Cytochrome bo(3) ubiquinol oxidase subunit 3 (cyoC).